Consider the following 433-residue polypeptide: Glucose-6-phosphate isomerase (433 aa).

Glu285 functions as the Proton donor in the catalytic mechanism. Residues His306 and Lys421 contribute to the active site.

This sequence belongs to the GPI family.

The protein resides in the cytoplasm. The enzyme catalyses alpha-D-glucose 6-phosphate = beta-D-fructose 6-phosphate. The protein operates within carbohydrate biosynthesis; gluconeogenesis. It functions in the pathway carbohydrate degradation; glycolysis; D-glyceraldehyde 3-phosphate and glycerone phosphate from D-glucose: step 2/4. Catalyzes the reversible isomerization of glucose-6-phosphate to fructose-6-phosphate. This is Glucose-6-phosphate isomerase from Mycoplasma mobile (strain ATCC 43663 / 163K / NCTC 11711) (Mesomycoplasma mobile).